Consider the following 357-residue polypeptide: 4-hydroxy-3-methylbut-2-en-1-yl diphosphate synthase (flavodoxin) (357 aa).

Residues Cys264, Cys267, Cys299, and Glu306 each coordinate [4Fe-4S] cluster.

This sequence belongs to the IspG family. Requires [4Fe-4S] cluster as cofactor.

The catalysed reaction is (2E)-4-hydroxy-3-methylbut-2-enyl diphosphate + oxidized [flavodoxin] + H2O + 2 H(+) = 2-C-methyl-D-erythritol 2,4-cyclic diphosphate + reduced [flavodoxin]. The protein operates within isoprenoid biosynthesis; isopentenyl diphosphate biosynthesis via DXP pathway; isopentenyl diphosphate from 1-deoxy-D-xylulose 5-phosphate: step 5/6. Its function is as follows. Converts 2C-methyl-D-erythritol 2,4-cyclodiphosphate (ME-2,4cPP) into 1-hydroxy-2-methyl-2-(E)-butenyl 4-diphosphate. The protein is 4-hydroxy-3-methylbut-2-en-1-yl diphosphate synthase (flavodoxin) of Campylobacter jejuni subsp. jejuni serotype O:6 (strain 81116 / NCTC 11828).